A 186-amino-acid polypeptide reads, in one-letter code: Elongation factor P (186 aa).

It belongs to the elongation factor P family.

The protein resides in the cytoplasm. Its pathway is protein biosynthesis; polypeptide chain elongation. In terms of biological role, involved in peptide bond synthesis. Stimulates efficient translation and peptide-bond synthesis on native or reconstituted 70S ribosomes in vitro. Probably functions indirectly by altering the affinity of the ribosome for aminoacyl-tRNA, thus increasing their reactivity as acceptors for peptidyl transferase. In Prochlorococcus marinus (strain MIT 9312), this protein is Elongation factor P.